Consider the following 299-residue polypeptide: Sulfate adenylyltransferase subunit 2 (299 aa).

It belongs to the PAPS reductase family. CysD subfamily. Sulfate-activating enzymes, NodP and NodQ, may be physically associated.

It catalyses the reaction sulfate + ATP + H(+) = adenosine 5'-phosphosulfate + diphosphate. Functionally, proposed to provide activated sulfate for transfer to nod factor. The protein is Sulfate adenylyltransferase subunit 2 (nodP) of Rhizobium meliloti (strain 1021) (Ensifer meliloti).